Here is a 430-residue protein sequence, read N- to C-terminus: 3-deoxy-D-manno-octulosonic acid transferase (430 aa).

Residues 12 to 32 (AFLVAAFLAAAPRIFYKVVFH) traverse the membrane as a helical; Signal-anchor segment. E66 functions as the Proton acceptor in the catalytic mechanism. CMP-binding positions include 274-275 (PR), 314-316 (MGI), and 341-344 (NLLE).

This sequence belongs to the glycosyltransferase group 1 family. Glycosyltransferase 30 subfamily.

It localises to the cell inner membrane. It carries out the reaction lipid IVA (E. coli) + CMP-3-deoxy-beta-D-manno-octulosonate = alpha-Kdo-(2-&gt;6)-lipid IVA (E. coli) + CMP + H(+). The enzyme catalyses alpha-Kdo-(2-&gt;6)-lipid IVA (E. coli) + CMP-3-deoxy-beta-D-manno-octulosonate = alpha-Kdo-(2-&gt;4)-alpha-Kdo-(2-&gt;6)-lipid IVA (E. coli) + CMP + H(+). It catalyses the reaction alpha-Kdo-(2-&gt;4)-alpha-Kdo-(2-&gt;6)-lipid IVA (E. coli) + CMP-3-deoxy-beta-D-manno-octulosonate = alpha-Kdo-(2-&gt;8)-alpha-Kdo-(2-&gt;4)-alpha-Kdo-(2-&gt;6)-lipid IVA (E. coli) + CMP + H(+). Its pathway is bacterial outer membrane biogenesis; LPS core biosynthesis. Its function is as follows. Involved in lipopolysaccharide (LPS) biosynthesis. Catalyzes the transfer of three 3-deoxy-D-manno-octulosonate (Kdo) residues from CMP-Kdo to lipid IV(A), the tetraacyldisaccharide-1,4'-bisphosphate precursor of lipid A. Thus generates the genus-specific LPS epitope of Chlamydia, composed of the trisaccharide alpha-Kdo-(2-&gt;8)-alpha-Kdo-(2-&gt;4)-alpha-Kdo. In Chlamydia muridarum (strain MoPn / Nigg), this protein is 3-deoxy-D-manno-octulosonic acid transferase (waaA).